Reading from the N-terminus, the 180-residue chain is NADH-quinone oxidoreductase subunit I (180 aa).

2 4Fe-4S ferredoxin-type domains span residues 48-80 (IVLT…LQKA) and 90-119 (EFFR…LTPD). [4Fe-4S] cluster is bound by residues Cys-60, Cys-63, Cys-66, Cys-70, Cys-99, Cys-102, Cys-105, and Cys-109.

Belongs to the complex I 23 kDa subunit family. NDH-1 is composed of 13 different subunits. Subunits NuoA, H, J, K, L, M, N constitute the membrane sector of the complex. It depends on [4Fe-4S] cluster as a cofactor.

The protein resides in the cell inner membrane. The enzyme catalyses a quinone + NADH + 5 H(+)(in) = a quinol + NAD(+) + 4 H(+)(out). NDH-1 shuttles electrons from NADH, via FMN and iron-sulfur (Fe-S) centers, to quinones in the respiratory chain. The immediate electron acceptor for the enzyme in this species is believed to be ubiquinone. Couples the redox reaction to proton translocation (for every two electrons transferred, four hydrogen ions are translocated across the cytoplasmic membrane), and thus conserves the redox energy in a proton gradient. The sequence is that of NADH-quinone oxidoreductase subunit I from Edwardsiella ictaluri (strain 93-146).